The chain runs to 154 residues: Egg-lysin (154 aa).

A signal peptide spans 1-18 (MKLLVLCIFAMMATLAMS).

As to quaternary structure, homodimer. Sperm.

In terms of biological role, dissolves the egg vitelline layer nonenzymatically during fertilization. It creates a hole of about 3 mu-m in diameter through which the sperm pass. This chain is Egg-lysin, found in Haliotis walallensis (Flat abalone).